Here is a 324-residue protein sequence, read N- to C-terminus: Esterase FPSE_08126 (324 aa).

Catalysis depends on residues Ser156, Asp255, and His285.

The protein belongs to the AB hydrolase 3 family.

Its function is as follows. Esterase; part of the Fusarium detoxification of benzoxazolinone cluster involved in the degradation of benzoxazolinones produced by the host plant. Maize, wheat, and rye produce the 2 benzoxazinone phytoanticipins 2,4-dihy-droxy-7-methoxy-1,4-benzoxazin-3-one (DIMBOA) and 2,4-dihydroxy-1,4-benzoxazin-3-one (DIBOA) that, due to their inherent instability once released, spontaneously degrade to the more stable corresponding benzoxazolinones, 6-methoxy-2-benzoxazolinone (MBOA) and 2-benzoxazolinone (BOA), respectively. The first step in the detoxification of benzoxazolinones involves the hydrolysis of the cyclic ester bond of benzoxazolinones by the gamma-lactamase FDB1 to aminophenols. FDB1 is able to convert 2-benzoxazolinone (BOA) into 2-aminophenol (2-AP), as well as 6-methoxy-2-benzoxazolinone (MBOA) into 5-methoxy-2-aminophenol (2-AMP). The N-malonyltransferase FDB2 then metabolizes aminophenols via N-malonylation to non-toxic malonamic acids. FDB2 converts 2-AP into N-(2-hydroxyphenyl) malonamic acid (HPMA) and 2-AMP into N-(2-hydroxy-4-methoxyphenyl) malonamic acid (HMPMA). The cluster also contains 2 transcription factors (FDB3 and FPSE_08121), an aldo-keto reductase (FPSE_08125) that possibly associates with a ketone component of BOA and MBOA degradation, an esterase (FPSE_08126), an acyl-CoA transferase (FPSE_08120), a solute carrier protein (FPSE_08119) and a transmembrane transporter (FPSE_08127) proposed to shuttle metabolites of benzoxazolinone degradation. This Fusarium pseudograminearum (strain CS3096) (Wheat and barley crown-rot fungus) protein is Esterase FPSE_08126.